The sequence spans 396 residues: MAKAKFERSKPHVNIGTIGHVDHGKTTTTAAITKVLADKFPEANKSFAFDAIDKAPEEKERGITINISHVEYETEKRHYAHVDAPGHADYIKNMITGAAQMDGAILVVAATDGPMPQTREHVLLARQVGVPYILVALNKCDMVDDEELLELVEMEVRELLAEQDFDEEAPVVHISALKALEGDEKWANQILELMQACDESIPDPERETDKPFLMPVEDIFTITGRGTVVTGRVERGILNLNDEVEILGIREKSQKTTVTSIEMFNKLLDTAEAGDNAALLLRGLKREDVERGQIIAKPGEYTPHTEFEGSVYVLSKDEGGRHTPFFDNYRPQFYFRTTDVTGVVKLPEGTEMVMPGDNVDMSVTLIQPVAMDEGLRFAIREGGRTVGAGRVTKINK.

The tr-type G domain maps to Lys-10 to Glu-205. Residues Gly-19–Thr-26 are G1. A GTP-binding site is contributed by Gly-19 to Thr-26. A Mg(2+)-binding site is contributed by Thr-26. Residues Gly-62–Asn-66 are G2. Residues Asp-83 to Gly-86 are G3. GTP is bound by residues Asp-83–His-87 and Asn-138–Asp-141. Positions Asn-138 to Asp-141 are G4. Residues Ser-175 to Leu-177 are G5.

Belongs to the TRAFAC class translation factor GTPase superfamily. Classic translation factor GTPase family. EF-Tu/EF-1A subfamily. Monomer.

The protein localises to the cytoplasm. It carries out the reaction GTP + H2O = GDP + phosphate + H(+). In terms of biological role, GTP hydrolase that promotes the GTP-dependent binding of aminoacyl-tRNA to the A-site of ribosomes during protein biosynthesis. The protein is Elongation factor Tu of Corynebacterium jeikeium (strain K411).